We begin with the raw amino-acid sequence, 594 residues long: Potassium-transporting ATPase potassium-binding subunit (594 aa).

Transmembrane regions (helical) follow at residues 3–23, 67–87, 136–156, 179–199, 287–307, 314–334, 415–435, 453–473, 519–539, and 562–582; these read ADFL…APLL, AVAM…LQRL, ALTV…IALV, LYVL…QGVV, LEML…GEMV, VAIL…AAYF, GLYG…LMIG, VALV…VAVL, VLLG…ILAL, and LFVA…YVPA.

It belongs to the KdpA family. The system is composed of three essential subunits: KdpA, KdpB and KdpC.

It localises to the cell inner membrane. Its function is as follows. Part of the high-affinity ATP-driven potassium transport (or Kdp) system, which catalyzes the hydrolysis of ATP coupled with the electrogenic transport of potassium into the cytoplasm. This subunit binds the periplasmic potassium ions and delivers the ions to the membrane domain of KdpB through an intramembrane tunnel. In Bordetella bronchiseptica (strain ATCC BAA-588 / NCTC 13252 / RB50) (Alcaligenes bronchisepticus), this protein is Potassium-transporting ATPase potassium-binding subunit.